A 178-amino-acid polypeptide reads, in one-letter code: Large ribosomal subunit protein uL5 (178 aa).

The protein belongs to the universal ribosomal protein uL5 family. In terms of assembly, part of the 50S ribosomal subunit; part of the 5S rRNA/L5/L18/L25 subcomplex. Contacts the 5S rRNA and the P site tRNA. Forms a bridge to the 30S subunit in the 70S ribosome.

This is one of the proteins that bind and probably mediate the attachment of the 5S RNA into the large ribosomal subunit, where it forms part of the central protuberance. In the 70S ribosome it contacts protein S13 of the 30S subunit (bridge B1b), connecting the 2 subunits; this bridge is implicated in subunit movement. Contacts the P site tRNA; the 5S rRNA and some of its associated proteins might help stabilize positioning of ribosome-bound tRNAs. In Wolbachia pipientis subsp. Culex pipiens (strain wPip), this protein is Large ribosomal subunit protein uL5.